Here is a 315-residue protein sequence, read N- to C-terminus: 1-aminocyclopropane-1-carboxylate oxidase 1 (315 aa).

One can recognise a Fe2OG dioxygenase domain in the interval 153-253; sequence PNFGTKVSNY…RMSLASFYNP (101 aa). Fe cation is bound by residues His177, Asp179, and His234.

This sequence belongs to the iron/ascorbate-dependent oxidoreductase family. The cofactor is Fe cation. Predominantly expressed in the petals and the stigma and style.

It carries out the reaction 1-aminocyclopropane-1-carboxylate + L-ascorbate + O2 = ethene + L-dehydroascorbate + hydrogen cyanide + CO2 + 2 H2O. Its pathway is alkene biosynthesis; ethylene biosynthesis via S-adenosyl-L-methionine; ethylene from S-adenosyl-L-methionine: step 2/2. This Solanum lycopersicum (Tomato) protein is 1-aminocyclopropane-1-carboxylate oxidase 1 (ACO1).